The primary structure comprises 147 residues: MNNILVINGPNLNLLGKREPDIYGNITLENINQKIKLHFKNEDLKIDFFQSNEEGKIIDKIIESEKKYNAIVINPAAYSHYSIAILDAMRSINIPVVEVHLSNIYKREEYRKKSVTAEASLGVISGFGYYGYIMAIEFILNNLVRER.

Y23 serves as the catalytic Proton acceptor. N74, H80, and D87 together coordinate substrate. The Proton donor role is filled by H100. Residues 101-102 and R111 contribute to the substrate site; that span reads LS.

It belongs to the type-II 3-dehydroquinase family. In terms of assembly, homododecamer.

It carries out the reaction 3-dehydroquinate = 3-dehydroshikimate + H2O. Its pathway is metabolic intermediate biosynthesis; chorismate biosynthesis; chorismate from D-erythrose 4-phosphate and phosphoenolpyruvate: step 3/7. In terms of biological role, catalyzes a trans-dehydration via an enolate intermediate. This chain is 3-dehydroquinate dehydratase, found in Clostridium botulinum (strain ATCC 19397 / Type A).